The primary structure comprises 250 residues: Ribonuclease HII (250 aa).

The 185-residue stretch at 66-250 folds into the RNase H type-2 domain; the sequence is ELVAGVDEVG…TFAPVSDFFK (185 aa). A divalent metal cation is bound by residues Asp-72, Glu-73, and Asp-164.

It belongs to the RNase HII family. The cofactor is Mn(2+). Mg(2+) is required as a cofactor.

The protein localises to the cytoplasm. It catalyses the reaction Endonucleolytic cleavage to 5'-phosphomonoester.. Functionally, endonuclease that specifically degrades the RNA of RNA-DNA hybrids. This chain is Ribonuclease HII, found in Lactobacillus helveticus (strain DPC 4571).